The sequence spans 285 residues: 33 kDa chaperonin (285 aa).

Cystine bridges form between Cys-228/Cys-230 and Cys-261/Cys-264.

The protein belongs to the HSP33 family. In terms of processing, under oxidizing conditions two disulfide bonds are formed involving the reactive cysteines. Under reducing conditions zinc is bound to the reactive cysteines and the protein is inactive.

It is found in the cytoplasm. Its function is as follows. Redox regulated molecular chaperone. Protects both thermally unfolding and oxidatively damaged proteins from irreversible aggregation. Plays an important role in the bacterial defense system toward oxidative stress. The sequence is that of 33 kDa chaperonin from Hahella chejuensis (strain KCTC 2396).